The chain runs to 289 residues: Type III pantothenate kinase (289 aa).

9–16 contributes to the ATP binding site; the sequence is DAGNSRVK. Substrate is bound by residues Y106 and 113 to 116; that span reads GSDR. The active-site Proton acceptor is the D115. T139 contacts ATP. Position 209 (T209) interacts with substrate.

This sequence belongs to the type III pantothenate kinase family. As to quaternary structure, homodimer. The cofactor is NH4(+). Requires K(+) as cofactor.

The protein resides in the cytoplasm. The enzyme catalyses (R)-pantothenate + ATP = (R)-4'-phosphopantothenate + ADP + H(+). Its pathway is cofactor biosynthesis; coenzyme A biosynthesis; CoA from (R)-pantothenate: step 1/5. In terms of biological role, catalyzes the phosphorylation of pantothenate (Pan), the first step in CoA biosynthesis. The chain is Type III pantothenate kinase from Paraburkholderia phymatum (strain DSM 17167 / CIP 108236 / LMG 21445 / STM815) (Burkholderia phymatum).